We begin with the raw amino-acid sequence, 339 residues long: TATA-box-binding protein (339 aa).

3 disordered regions span residues Met1–Met21, Thr36–Gln71, and Leu127–Ser159. Residues Leu38 to Ser50 show a composition bias toward polar residues. Composition is skewed to low complexity over residues Arg57–Gln71, Leu127–Leu138, and Met146–Ser156. 2 tandem repeats follow at residues Leu165 to Val241 and Ile255 to Leu332. The DNA site is built by Asn167, Arg203, Lys218, Asn257, and Arg294.

The protein belongs to the TBP family. In terms of assembly, binds DNA as monomer. Component of the TFIID basal transcription factor complex, composed of TATA-box-binding protein TBP, and a number of TBP-associated factors (TAFs), including TAF1, TAF2, TAF3, TAF4, TAF5, TAF6, TAF7, TAF8, TAF9, TAF10, TAF11, TAF12 and TAF13. Part of a TFIID-containing RNA polymerase II pre-initiation complex that is composed of TBP and at least GTF2A1, GTF2A2, GTF2E1, GTF2E2, GTF2F1, GTF2H2, GTF2H3, GTF2H4, GTF2H5, GTF2B, TCEA1, ERCC2, ERCC3, TAF1, TAF2, TAF3, TAF4, TAF5, TAF6, TAF7, TAF8, TAF9, TAF10, TAF11, TAF12 and TAF13. Component of the transcription factor SL1/TIF-IB complex, composed of TBP and at least TAF1A, TAF1B, TAF1C and TAF1D. Association of TBP to form either TFIID or SL1/TIF-IB appears to be mutually exclusive. Interacts with TAF1A, TAF1B and TAF1C. Interacts with TFIIB, NCOA6, DRAP1, DR1 and ELF3. Interacts with SPIB, SNAPC1, SNAPC2 and SNAPC4. Interacts with UTF1. Interacts with BRF2; this interaction promotes recruitment of BRF2 to TATA box-containing promoters. Interacts with UBTFD. Interacts with GPBP1D. Interacts with CITED2. Interacts with ATF7IP. Interacts with LLPH. Interacts with HSF1 (via transactivation domain). Interacts with GTF2B (via C-terminus); this interaction with promoter-bound TBP guides RNA polymerase II into the pre-initiation complex (PIC). Interacts with PAX5. Interacts with MSX1; the interaction may inhibit MSX1 autoinactivation. As to quaternary structure, (Microbial infection) Interacts with HIV-1 Tat. (Microbial infection) Interacts with herpes simplex virus 1 ICP4. In terms of assembly, (Microbial infection) Interacts with herpes simplex virus 2 ICP4. As to quaternary structure, (Microbial infection) Interacts with human adenovirus E1A protein; this interaction probably disrupts the TBP-TATA complex. In terms of tissue distribution, widely expressed, with levels highest in the testis and ovary.

It localises to the nucleus. Functionally, the TFIID basal transcription factor complex plays a major role in the initiation of RNA polymerase II (Pol II)-dependent transcription. TFIID recognizes and binds promoters with or without a TATA box via its subunit TBP, a TATA-box-binding protein, and promotes assembly of the pre-initiation complex (PIC). The TFIID complex consists of TBP and TBP-associated factors (TAFs), including TAF1, TAF2, TAF3, TAF4, TAF5, TAF6, TAF7, TAF8, TAF9, TAF10, TAF11, TAF12 and TAF13. The TFIID complex structure can be divided into 3 modules TFIID-A, TFIID-B, and TFIID-C. TBP forms the TFIID-A module together with TAF3 and TAF5. TBP is a general transcription factor that functions at the core of the TFIID complex. During assembly of the core PIC on the promoter, as part of TFIID, TBP binds to and also bends promoter DNA, irrespective of whether the promoter contains a TATA box. Component of a BRF2-containing transcription factor complex that regulates transcription mediated by RNA polymerase III. Component of the transcription factor SL1/TIF-IB complex, which is involved in the assembly of the PIC during RNA polymerase I-dependent transcription. The rate of PIC formation probably is primarily dependent on the rate of association of SL1 with the rDNA promoter. SL1 is involved in stabilization of nucleolar transcription factor 1/UBTF on rDNA. This is TATA-box-binding protein (TBP) from Homo sapiens (Human).